The primary structure comprises 137 residues: Proofreading thioesterase EntH (137 aa).

Catalysis depends on Glu-63, which acts as the Nucleophile or proton acceptor.

This sequence belongs to the thioesterase PaaI family. Homotetramer. Dimer of dimers. Interacts specifically with the aryl carrier protein (ArCP) domain of EntB.

The protein localises to the cytoplasm. It participates in siderophore biosynthesis; enterobactin biosynthesis. Its function is as follows. Required for optimal enterobactin synthesis. Acts as a proofreading enzyme that prevents EntB misacylation by hydrolyzing the thioester bound existing between EntB and wrongly charged molecules. This chain is Proofreading thioesterase EntH, found in Enterobacter lignolyticus (strain SCF1).